Reading from the N-terminus, the 74-residue chain is uncharacterized protein (74 aa).

This is an uncharacterized protein from Schizosaccharomyces pombe (strain 972 / ATCC 24843) (Fission yeast).